A 402-amino-acid chain; its full sequence is GDSL esterase/lipase At1g20120 (402 aa).

The signal sequence occupies residues 1 to 35 (MLQDRVSGSLSSSKISRCVLFLSLFCFFLLTMHAS). The tract at residues 41–69 (RVPNPGPSPAPEPKPCPSPGPNPAPATTK) is disordered. A compositionally biased stretch (pro residues) spans 44-64 (NPGPSPAPEPKPCPSPGPNPA). Asn73 carries an N-linked (GlcNAc...) asparagine glycan. Ser85 (nucleophile) is an active-site residue. Asn314 and Asn367 each carry an N-linked (GlcNAc...) asparagine glycan. Catalysis depends on residues Asp375 and His378.

This sequence belongs to the 'GDSL' lipolytic enzyme family.

It is found in the secreted. This chain is GDSL esterase/lipase At1g20120, found in Arabidopsis thaliana (Mouse-ear cress).